The chain runs to 182 residues: uncharacterized protein (182 aa).

This sequence belongs to the staphylococcal tandem lipoprotein family.

This is an uncharacterized protein from Staphylococcus haemolyticus (strain JCSC1435).